A 450-amino-acid polypeptide reads, in one-letter code: MGKYFGTDGVRGEANVGLTPELAFKLGRFGGYVLSQHETGRPKVFVARDTRISGEMLESALVAGLLSVGIEVYKLGVLATPGVSYLVRTENASAGVMISASHNPALDNGIKFFGGDGFKLDDAREAEIEALLDAAEDTLPRPSAEGLGTLVDYPEGLRKYEKFLVTTGLDLGGMKVALDAANGAAAVSARNIFLDLNAEIAVIGDQPDGLNINAGVGSTHPEQLQALVRESGSAIGLAFDGDSDRLIAVDENGDIVDGDKVMYIIGKYLSQKGELAKNTIVTTVMSNLGFHKALDREGINKAVTAVGDRYVVEEMRKNGYNLGGEQSGHVIIMDYNTTGDGQLTAIQLTKVMVETGKSLSELAAEVTIYPQKLVNIRVENSMKDKAMDVPAIAAIIEKMEAEMAGNGRILVRPSGTEPLLRVMAEAPTDDEVNYYVDTIADVVRAEIGLD.

S101 serves as the catalytic Phosphoserine intermediate. Residues S101, D240, D242, and D244 each coordinate Mg(2+). The residue at position 101 (S101) is a Phosphoserine.

The protein belongs to the phosphohexose mutase family. It depends on Mg(2+) as a cofactor. In terms of processing, activated by phosphorylation.

It carries out the reaction alpha-D-glucosamine 1-phosphate = D-glucosamine 6-phosphate. Its function is as follows. Catalyzes the conversion of glucosamine-6-phosphate to glucosamine-1-phosphate. This Streptococcus thermophilus (strain CNRZ 1066) protein is Phosphoglucosamine mutase.